The chain runs to 103 residues: V-type sodium ATPase subunit G (103 aa).

It belongs to the V-ATPase F subunit family.

Functionally, involved in ATP-driven sodium extrusion. This chain is V-type sodium ATPase subunit G (ntpG), found in Enterococcus hirae (strain ATCC 9790 / DSM 20160 / JCM 8729 / LMG 6399 / NBRC 3181 / NCIMB 6459 / NCDO 1258 / NCTC 12367 / WDCM 00089 / R).